We begin with the raw amino-acid sequence, 447 residues long: N-succinylarginine dihydrolase (447 aa).

Substrate is bound by residues 19–28 (AGLSFGNEAS), asparagine 110, and 137–138 (HR). Glutamate 174 is an active-site residue. Residue arginine 212 participates in substrate binding. The active site involves histidine 248. Substrate is bound by residues aspartate 250 and asparagine 359. Cysteine 365 serves as the catalytic Nucleophile.

Belongs to the succinylarginine dihydrolase family. In terms of assembly, homodimer.

The catalysed reaction is N(2)-succinyl-L-arginine + 2 H2O + 2 H(+) = N(2)-succinyl-L-ornithine + 2 NH4(+) + CO2. It functions in the pathway amino-acid degradation; L-arginine degradation via AST pathway; L-glutamate and succinate from L-arginine: step 2/5. Functionally, catalyzes the hydrolysis of N(2)-succinylarginine into N(2)-succinylornithine, ammonia and CO(2). This is N-succinylarginine dihydrolase from Salmonella typhimurium (strain LT2 / SGSC1412 / ATCC 700720).